Here is a 776-residue protein sequence, read N- to C-terminus: Microtubule-associated protein tau (776 aa).

Positions 1 to 26 (MAEPRQEFEVMEDHAGTYGLGDRKDQ) are enriched in basic and acidic residues. The segment at 1–591 (MAEPRQEFEV…PVPMPDLKNV (591 aa)) is disordered. Residue alanine 2 is modified to N-acetylalanine. Tyrosine 18 and tyrosine 29 each carry phosphotyrosine. Residue lysine 44 forms a Glycyl lysine isopeptide (Lys-Gly) (interchain with G-Cter in ubiquitin) linkage. Serine 46 and serine 61 each carry phosphoserine. Positions 61–71 (SETSDAKSTPT) are enriched in polar residues. Phosphothreonine is present on residues threonine 69, threonine 71, and threonine 111. Composition is skewed to basic and acidic residues over residues 179 to 189 (EGGRHAPELLK) and 207 to 216 (GGKERPGSKE). Position 214 is a phosphoserine (serine 214). Over residues 217–228 (EVDEDRDVDESS) the composition is skewed to acidic residues. 2 stretches are compositionally biased toward basic and acidic residues: residues 293-303 (KGQDAHLEFTF) and 314-323 (EQAHSEEHLG). The segment covering 324–340 (RAAFPGAPGEGPEARGP) has biased composition (low complexity). Composition is skewed to basic and acidic residues over residues 344–356 (EDTK…EPSE) and 381–393 (KSKD…DKKA). The segment covering 440-452 (KYVSSVTPRTGSS) has biased composition (polar residues). The segment covering 455–466 (KEMKLKGADGKT) has biased composition (basic and acidic residues). Threonine 470 is modified (phosphothreonine). At arginine 472 the chain carries Omega-N-methylarginine. Lysine 480 is modified (N6,N6-dimethyllysine; alternate). Residue lysine 480 is modified to N6-acetyllysine; alternate. A phosphothreonine mark is found at threonine 486, threonine 492, and threonine 498. A phosphoserine mark is found at serine 502, serine 526, and serine 530. Residues 517–528 (RSERGEPPKSGD) are compositionally biased toward basic and acidic residues. Low complexity predominate over residues 529–549 (RSGYSSPGSPGTPGSRSRTPS). Tyrosine 532 carries the post-translational modification Phosphotyrosine. Residues serine 533, serine 534, and serine 537 each carry the phosphoserine modification. 2 positions are modified to phosphothreonine: threonine 540 and threonine 547. Position 549 is a phosphoserine (serine 549). Position 552 is a phosphothreonine (threonine 552). N6-acetyllysine is present on lysine 560. Threonine 566 carries the phosphothreonine modification. Residues serine 570 and serine 572 each carry the phosphoserine modification. 4 Tau/MAP repeats span residues 579–609 (QTAP…GGGK), 610–640 (VQII…GGGS), 641–671 (VQIV…GGGQ), and 672–703 (VEVK…GGGN). Residue lysine 589 forms a Glycyl lysine isopeptide (Lys-Gly) (interchain with G-Cter in ubiquitin) linkage. An N6-acetyllysine; alternate modification is found at lysine 594. Position 594 is an N6-methyllysine; alternate (lysine 594). Residue lysine 594 forms a Glycyl lysine isopeptide (Lys-Gly) (interchain with G-Cter in ubiquitin); alternate linkage. Residue serine 597 is modified to Phosphoserine. Lysine 602 is covalently cross-linked (Glycyl lysine isopeptide (Lys-Gly) (interchain with G-Cter in ubiquitin)). At lysine 616 the chain carries N6-acetyllysine; alternate. Lysine 616 is covalently cross-linked (Glycyl lysine isopeptide (Lys-Gly) (interchain with G-Cter in ubiquitin); alternate). Phosphoserine is present on residues serine 620 and serine 624. The residue at position 625 (lysine 625) is an N6-acetyllysine. Serine 628 carries the post-translational modification Phosphoserine. Lysine 633 bears the N6-acetyllysine; alternate mark. Lysine 633 participates in a covalent cross-link: Glycyl lysine isopeptide (Lys-Gly) (interchain with G-Cter in ubiquitin); alternate. A Phosphoserine modification is found at serine 640. Residue lysine 646 is modified to N6,N6-dimethyllysine; alternate. Lysine 646, lysine 652, and lysine 656 each carry N6-acetyllysine; alternate. Residues lysine 646, lysine 652, and lysine 656 each participate in a glycyl lysine isopeptide (Lys-Gly) (interchain with G-Cter in ubiquitin); alternate cross-link. Serine 659 is subject to Phosphoserine. An N6-acetyllysine; alternate mark is found at lysine 666, lysine 678, and lysine 682. Residues lysine 666, lysine 678, and lysine 682 each participate in a glycyl lysine isopeptide (Lys-Gly) (interchain with G-Cter in ubiquitin); alternate cross-link. Position 684 is an omega-N-methylarginine (arginine 684). Serine 687 carries the post-translational modification Phosphoserine. Lysine 688 is covalently cross-linked (Glycyl lysine isopeptide (Lys-Gly) (interchain with G-Cter in ubiquitin)). Position 691 is a phosphoserine (serine 691). Lysine 704 bears the N6-acetyllysine; alternate mark. A Glycyl lysine isopeptide (Lys-Gly) (interchain with G-Cter in ubiquitin); alternate cross-link involves residue lysine 704. A Glycyl lysine isopeptide (Lys-Gly) (interchain with G-Cter in ubiquitin) cross-link involves residue lysine 710. N6-acetyllysine; alternate is present on lysine 720. Lysine 720 is covalently cross-linked (Glycyl lysine isopeptide (Lys-Gly) (interchain with G-Cter in ubiquitin); alternate). Tyrosine 729 carries the post-translational modification Phosphotyrosine. Phosphoserine is present on residues serine 731 and serine 735. The segment at 733–752 (VVSGDTSPRHLSNVSSTGSI) is disordered. A compositionally biased stretch (polar residues) spans 736-751 (GDTSPRHLSNVSSTGS). Phosphothreonine is present on threonine 738. A phosphoserine mark is found at serine 739, serine 744, serine 751, and serine 757. Threonine 762 carries the phosphothreonine modification.

In terms of assembly, interacts with MARK1, MARK2, MARK3 and MARK4. Interacts with SQSTM1 when polyubiquitinated. Interacts with PSMC2 through SQSTM1. Interacts with FKBP4. Binds to CSNK1D. Interacts with SGK1. Interacts with EPM2A; the interaction dephosphorylates MAPT at Ser-396. Interacts with PIN1. Interacts with LRRK2. Interacts with LRP1, leading to endocytosis; this interaction is reduced in the presence of LRPAP1/RAP. In terms of processing, polyubiquitinated. Requires functional TRAF6 and may provoke SQSTM1-dependent degradation by the proteasome. Phosphorylation at various serine and threonine residues in S-P or T-P motifs by proline-directed protein kinases (PDPK1, CDK1, CDK5, GSK3, MAPK) (a few sites per protein in interphase, more in mitosis), and at serine residues in K-X-G-S motifs by MAP/microtubule affinity-regulating kinase (MARK1, MARK2, MARK3 or MARK4), causing detachment from microtubules, and their disassembly. Phosphorylation at Ser-597 by BRSK1 and BRSK2 in neurons affects ability to bind microtubules and plays a role in neuron polarization. Phosphorylated by PHK. Dephosphorylation at several serine and threonine residues by the serine/threonine phosphatase PPP5C. Phosphorylation at Ser-214 by SGK1 mediates microtubule depolymerization and neurite formation in hippocampal neurons.

The protein resides in the cytoplasm. The protein localises to the cytosol. Its subcellular location is the cell membrane. It is found in the cytoskeleton. It localises to the cell projection. The protein resides in the axon. The protein localises to the dendrite. Its function is as follows. Promotes microtubule assembly and stability, and might be involved in the establishment and maintenance of neuronal polarity. The C-terminus binds axonal microtubules while the N-terminus binds neural plasma membrane components, suggesting that tau functions as a linker protein between both. Axonal polarity is predetermined by tau localization (in the neuronal cell) in the domain of the cell body defined by the centrosome. The short isoforms allow plasticity of the cytoskeleton whereas the longer isoforms may preferentially play a role in its stabilization. This is Microtubule-associated protein tau (MAPT) from Pan troglodytes (Chimpanzee).